The following is a 299-amino-acid chain: Diaminopimelate epimerase (299 aa).

Residues N13, Q46, and N66 each coordinate substrate. C75 acts as the Proton donor in catalysis. Substrate contacts are provided by residues 76-77 (GN), N166, N199, and 217-218 (ER). The active-site Proton acceptor is the C226. 227-228 (GT) lines the substrate pocket.

Belongs to the diaminopimelate epimerase family. Homodimer.

The protein resides in the cytoplasm. The enzyme catalyses (2S,6S)-2,6-diaminopimelate = meso-2,6-diaminopimelate. It participates in amino-acid biosynthesis; L-lysine biosynthesis via DAP pathway; DL-2,6-diaminopimelate from LL-2,6-diaminopimelate: step 1/1. Its function is as follows. Catalyzes the stereoinversion of LL-2,6-diaminopimelate (L,L-DAP) to meso-diaminopimelate (meso-DAP), a precursor of L-lysine and an essential component of the bacterial peptidoglycan. This chain is Diaminopimelate epimerase, found in Paraburkholderia phytofirmans (strain DSM 17436 / LMG 22146 / PsJN) (Burkholderia phytofirmans).